The following is a 132-amino-acid chain: Insulin-like 3 (132 aa).

Positions 1 to 24 are cleaved as a signal peptide; the sequence is MSPRPLAWALVLLGAALAVALALG. Cystine bridges form between Cys-36/Cys-117, Cys-48/Cys-130, and Cys-116/Cys-121. The propeptide at 61 to 104 is c peptide like; the sequence is VAGGDRELLQWLEGRHLHGQVSDGDPMLVLVPQALPQASLHHHH.

It belongs to the insulin family. Heterodimer of a B chain and an A chain linked by two disulfide bonds. As to expression, more strongly expressed in testis than in ovary.

Its subcellular location is the secreted. Its function is as follows. Seems to play a role in testicular function. May be a trophic hormone with a role in testicular descent in fetal life. Is a ligand for LGR8 receptor. This chain is Insulin-like 3 (INSL3), found in Canis lupus familiaris (Dog).